Here is a 188-residue protein sequence, read N- to C-terminus: Kappa-casein (188 aa).

Positions 1–21 (MMKSSFLIVPILALTLPFLGA) are cleaved as a signal peptide. O-linked (GalNAc...) threonine glycans are attached at residues Thr143 and Thr148. Thr163 carries the post-translational modification Phosphothreonine. Ser167 carries the post-translational modification Phosphoserine; alternate. O-linked (GalNAc...) serine; alternate glycosylation occurs at Ser167. Residue Thr184 is glycosylated (O-linked (GalNAc...) threonine). Ser185 carries the phosphoserine modification.

It belongs to the kappa-casein family. In terms of tissue distribution, mammary gland specific. Secreted in milk.

The protein resides in the secreted. Its function is as follows. Kappa-casein stabilizes micelle formation, preventing casein precipitation in milk. This Sus scrofa (Pig) protein is Kappa-casein (CSN3).